The sequence spans 71 residues: MKNDIHPNYKELSVTCSCGQQFVTKSTMGKDAFSIEVCSSCHPFYTGKQKIVDTAGRVDKFNQKFGSFFKR.

Zn(2+) contacts are provided by Cys16, Cys18, Cys38, and Cys41.

The protein belongs to the bacterial ribosomal protein bL31 family. Type A subfamily. In terms of assembly, part of the 50S ribosomal subunit. The cofactor is Zn(2+).

Binds the 23S rRNA. The sequence is that of Large ribosomal subunit protein bL31 from Chromobacterium violaceum (strain ATCC 12472 / DSM 30191 / JCM 1249 / CCUG 213 / NBRC 12614 / NCIMB 9131 / NCTC 9757 / MK).